Reading from the N-terminus, the 87-residue chain is UPF0250 protein BUsg_472 (87 aa).

Belongs to the UPF0250 family.

The polypeptide is UPF0250 protein BUsg_472 (Buchnera aphidicola subsp. Schizaphis graminum (strain Sg)).